Consider the following 396-residue polypeptide: 3-hydroxykynurenine transaminase (396 aa).

A binds to and confers specificity for 3-hydroxykynurenine; shared with dimeric partner region spans residues 43-44 (SN). Residues 77–79 (SAH), Ser154, and Gln204 each bind pyridoxal 5'-phosphate. Residue Ser154 participates in substrate binding. Lys205 carries the post-translational modification N6-(pyridoxal phosphate)lysine. Tyr256 and Thr259 together coordinate pyridoxal 5'-phosphate. Residue Arg356 coordinates substrate.

It belongs to the class-V pyridoxal-phosphate-dependent aminotransferase family. As to quaternary structure, homodimer. The cofactor is pyridoxal 5'-phosphate. Expressed in gut and ovaries.

It localises to the peroxisome. The enzyme catalyses L-kynurenine + glyoxylate = kynurenate + glycine + H2O. The catalysed reaction is 3-hydroxy-L-kynurenine + glyoxylate = xanthurenate + glycine + H2O. It carries out the reaction 3-hydroxy-L-kynurenine + pyruvate = xanthurenate + L-alanine + H2O. It catalyses the reaction glyoxylate + L-alanine = glycine + pyruvate. It functions in the pathway amino-acid degradation; L-kynurenine degradation; kynurenate from L-kynurenine: step 1/2. Catalyzes the pyridoxal 5'-phosphate-dependent transamination of both 3-hydroxykynurenine and L-kynurenine to xanthurenic acid and kynurenic acid, respectively, preferentially using the alpha-ketoacid glyoxylate as the amino group acceptor. Although glyoxylate is the preferred amino group acceptor, transamination of 3-hydroxykynurenine also works with pyruvate as the amino acceptor in vitro. Involved in the detoxification of cytotoxic metabolite 3-hydroxykynurenine generated by the hydroxylation of L-kynurenine, an intermediate in the tryptophan catabolism pathway. The Plasmodium parasite uses xanthurenic acid produced in the midgut to activate its gametocytes ingested during a blood meal. Also catalyzes, although with a lesser efficiency, the transamination of alanine with glyoxylate as an amino group acceptor. May play a role in the detoxification of glyoxylate, a toxic plant metabolite from the diet. The polypeptide is 3-hydroxykynurenine transaminase (Anopheles gambiae (African malaria mosquito)).